A 224-amino-acid polypeptide reads, in one-letter code: MKKAVVLLSGGMDSAAVIALAQEQGFAVHALSVRYGQRHTSELDAAARVAAAQGVVAHKVVDVDLRSIGGSALTADIDVPEAGGAGIPVTYVPARNTIMLSLALGWAEVVGANDLFCGVNAVDYSGYPDCRPEFVRAFEVLANLATKAGVEGAGLRVHAPLQFLSKADIVRAGVRLGVDFGLTVSCYNADADGRACGHCDACRLRAAGFADAGVPDPTHYAISS.

8-18 (LSGGMDSAAVI) serves as a coordination point for ATP. 4 residues coordinate Zn(2+): Cys186, Cys196, Cys199, and Cys202.

The protein belongs to the QueC family. Zn(2+) serves as cofactor.

It catalyses the reaction 7-carboxy-7-deazaguanine + NH4(+) + ATP = 7-cyano-7-deazaguanine + ADP + phosphate + H2O + H(+). It participates in purine metabolism; 7-cyano-7-deazaguanine biosynthesis. Functionally, catalyzes the ATP-dependent conversion of 7-carboxy-7-deazaguanine (CDG) to 7-cyano-7-deazaguanine (preQ(0)). This Xanthomonas campestris pv. campestris (strain 8004) protein is 7-cyano-7-deazaguanine synthase.